The sequence spans 537 residues: Apolipoprotein N-acyltransferase (537 aa).

The next 6 helical transmembrane spans lie at 10 to 30 (IALA…ITAG), 37 to 57 (LAPF…VWLI), 76 to 96 (YWFG…AFFV), 107 to 127 (FAVL…FALA), 181 to 201 (IGLW…ATLI), and 210 to 230 (AWRA…FGAI). The CN hydrolase domain maps to 248 to 501 (MQPNLQQDAK…EGILDASLPA (254 aa)). Glu-295 functions as the Proton acceptor in the catalytic mechanism. Residue Lys-360 is part of the active site. Cys-413 (nucleophile) is an active-site residue. The helical transmembrane segment at 507–527 (IYARVGDVPAAVLVALAVLLA) threads the bilayer.

It belongs to the CN hydrolase family. Apolipoprotein N-acyltransferase subfamily.

It localises to the cell inner membrane. The enzyme catalyses N-terminal S-1,2-diacyl-sn-glyceryl-L-cysteinyl-[lipoprotein] + a glycerophospholipid = N-acyl-S-1,2-diacyl-sn-glyceryl-L-cysteinyl-[lipoprotein] + a 2-acyl-sn-glycero-3-phospholipid + H(+). It functions in the pathway protein modification; lipoprotein biosynthesis (N-acyl transfer). Functionally, catalyzes the phospholipid dependent N-acylation of the N-terminal cysteine of apolipoprotein, the last step in lipoprotein maturation. The chain is Apolipoprotein N-acyltransferase from Bradyrhizobium diazoefficiens (strain JCM 10833 / BCRC 13528 / IAM 13628 / NBRC 14792 / USDA 110).